The following is a 239-amino-acid chain: Ribonuclease PH (239 aa).

Residues Arg-86 and 124-126 (GTR) each bind phosphate.

This sequence belongs to the RNase PH family. Homohexameric ring arranged as a trimer of dimers.

It catalyses the reaction tRNA(n+1) + phosphate = tRNA(n) + a ribonucleoside 5'-diphosphate. In terms of biological role, phosphorolytic 3'-5' exoribonuclease that plays an important role in tRNA 3'-end maturation. Removes nucleotide residues following the 3'-CCA terminus of tRNAs; can also add nucleotides to the ends of RNA molecules by using nucleoside diphosphates as substrates, but this may not be physiologically important. Probably plays a role in initiation of 16S rRNA degradation (leading to ribosome degradation) during starvation. This Rickettsia felis (strain ATCC VR-1525 / URRWXCal2) (Rickettsia azadi) protein is Ribonuclease PH.